Here is a 138-residue protein sequence, read N- to C-terminus: MSGSASFEGGVFSPYLTGRLPPWAGVRQNVMGSTVDGRPVQPANSSTLTYATLSSSPLDAAAAAAATAAANTILGMGYYGSIVANSSSSNNPSTLAEDKLLVLLAQLEALTQRLGELSKQVAQLREQTESAVATAKSK.

Positions 100–127 (LLVLLAQLEALTQRLGELSKQVAQLREQ) form a coiled coil.

This sequence belongs to the adenoviridae hexon-interlacing protein family. In terms of assembly, homotrimer. Interacts with hexon protein; this interaction tethers the hexons together. Self-interacts with adjacent proteins. Interacts with kinesin light chain KLC1; this interaction leads to capsid disruption at the nuclear pore complex during virus entry into host cell.

It localises to the virion. The protein localises to the host nucleus. In terms of biological role, structural component of the virion that acts as a cement protein on the capsid exterior and forms triskelion structures consisting of three molecules that stabilize three hexon trimers at the center of each icosahedral facet and fixes the peripentonal hexons. Dispensable for assembly. During virus entry, recruits the anterograde motor kinesin-1 to the capsid docked at the nuclear pore complex thereby subjecting the docked capsid to a pulling force. The resulting tension leads to capsid disruption, dispersion of capsid fragments toward cell periphery and eventually viral DNA entry into the host nucleus. The protein is Hexon-interlacing protein of Human adenovirus B serotype 7 (HAdV-7).